The following is a 323-amino-acid chain: MKKEINMENLLYIIIEGGLKSLIVIIGLLIGVAFATLLERKVMAAMQKRRGPNVVGFVGLLQPLADGLKLVLKETIIPIVADKIIYAIAPILTFTISIVLWSVIAVGVQSVFASINSGVIFILAISSIGVYGIILAGWASNSKYAFLGGLRSAAQMVSYEVALGLIILSIITYAGTVNIQEIMENQEKVWFIVPLLPGFLLAFISALAETNRPPFDLPEAEAELVSGYNVEYSSTGFALFFLGEYANIILMSVLLSVFFLGGIVSNKISGAMKGVGMLCSFIWVRATLPRYRYDQLMYLGWKSLLPFALLIYIGVISMVLIIK.

Transmembrane regions (helical) follow at residues 10 to 30 (LLYIIIEGGLKSLIVIIGLLI), 52 to 72 (PNVVGFVGLLQPLADGLKLVL), 84 to 104 (IIYAIAPILTFTISIVLWSVI), 119 to 139 (VIFILAISSIGVYGIILAGWA), 157 to 177 (VSYEVALGLIILSIITYAGTV), 189 to 209 (VWFIVPLLPGFLLAFISALAE), 245 to 265 (YANIILMSVLLSVFFLGGIVS), 268 to 288 (ISGAMKGVGMLCSFIWVRATL), and 302 to 322 (KSLLPFALLIYIGVISMVLII).

Belongs to the complex I subunit 1 family.

The protein resides in the mitochondrion inner membrane. It catalyses the reaction a ubiquinone + NADH + 5 H(+)(in) = a ubiquinol + NAD(+) + 4 H(+)(out). Core subunit of the mitochondrial membrane respiratory chain NADH dehydrogenase (Complex I) that is believed to belong to the minimal assembly required for catalysis. Complex I functions in the transfer of electrons from NADH to the respiratory chain. The immediate electron acceptor for the enzyme is believed to be ubiquinone. This chain is NADH-ubiquinone oxidoreductase chain 1 (nad1), found in Dictyostelium citrinum (Slime mold).